We begin with the raw amino-acid sequence, 1762 residues long: ADAMTS-like protein 1 (1762 aa).

A signal peptide spans Met1 to Ser28. The 50-residue stretch at Asp33–Pro82 folds into the TSP type-1 1 domain. Trp39 and Trp42 each carry a C-linked (Man) tryptophan glycan. 3 disulfides stabilise this stretch: Cys45–Cys76, Cys49–Cys81, and Cys60–Cys66. Residue Thr48 is glycosylated (O-linked (Fuc...) threonine). Asn251 carries an N-linked (GlcNAc...) asparagine glycan. Thr312 carries an O-linked (Fuc...) threonine glycan. TSP type-1 domains are found at residues Pro376–Pro424, Asp436–Tyr493, Glu522–Ser584, Glu607–Pro665, Cys666–Pro729, and Cys788–Ala850. Ser391 carries O-linked (Fuc...) serine glycosylation. A glycan (O-linked (Fuc...) threonine) is linked at Thr451. 3 disulfide bridges follow: Cys534–Cys578, Cys538–Cys583, and Cys549–Cys567. Disulfide bonds link Cys678–Cys723, Cys682–Cys728, Cys693–Cys712, Cys800–Cys844, Cys804–Cys849, Cys815–Cys832, and Cys899–Cys947. The Ig-like C2-type 1 domain maps to Pro861–Gly963. The interval Leu1120–Pro1164 is disordered. Low complexity predominate over residues Ser1139 to Gly1151. Ig-like C2-type domains lie at Pro1164–Thr1266, Pro1286–Leu1369, and Pro1395–Val1485. Disulfide bonds link Cys1202–Cys1250, Cys1308–Cys1353, and Cys1418–Cys1469. 2 consecutive TSP type-1 domains span residues Cys1545–Val1608 and Cys1666–Glu1726. In terms of domain architecture, PLAC spans Glu1726–Ala1762.

In terms of assembly, monomer. C-, N- and O-glycosylated. O-fucosylated by POFUT2 on a serine or a threonine residue found within the consensus sequence C1-X(2)-(S/T)-C2-G of the TSP type-1 repeat domains where C1 and C2 are the first and second cysteine residue of the repeat, respectively. Fucosylated repeats can then be further glycosylated by the addition of a beta-1,3-glucose residue by the glucosyltransferase, B3GALTL. Fucosylation mediates the efficient secretion of ADAMTSL1. Can also be C-glycosylated with one or two mannose molecules on tryptophan residues within the consensus sequence W-X-X-W of the TPRs, and N-glycosylated. These other glycosylations can also facilitate secretion. Post-translationally, disulfide bonds are present. In terms of tissue distribution, expressed primarily in adult skeletal muscle.

It is found in the secreted. The protein localises to the extracellular space. Its subcellular location is the extracellular matrix. The protein is ADAMTS-like protein 1 (ADAMTSL1) of Homo sapiens (Human).